Here is a 915-residue protein sequence, read N- to C-terminus: Alanine--tRNA ligase (915 aa).

Residues histidine 609, histidine 613, cysteine 712, and histidine 716 each coordinate Zn(2+).

This sequence belongs to the class-II aminoacyl-tRNA synthetase family. Zn(2+) is required as a cofactor.

It localises to the cytoplasm. It carries out the reaction tRNA(Ala) + L-alanine + ATP = L-alanyl-tRNA(Ala) + AMP + diphosphate. Functionally, catalyzes the attachment of alanine to tRNA(Ala) in a two-step reaction: alanine is first activated by ATP to form Ala-AMP and then transferred to the acceptor end of tRNA(Ala). Also edits incorrectly charged Ser-tRNA(Ala) and Gly-tRNA(Ala) via its editing domain. This is Alanine--tRNA ligase from Methanoculleus marisnigri (strain ATCC 35101 / DSM 1498 / JR1).